The following is a 117-amino-acid chain: Holo-[acyl-carrier-protein] synthase (117 aa).

Mg(2+)-binding residues include Asp-8 and Glu-58.

It belongs to the P-Pant transferase superfamily. AcpS family. Requires Mg(2+) as cofactor.

It localises to the cytoplasm. The enzyme catalyses apo-[ACP] + CoA = holo-[ACP] + adenosine 3',5'-bisphosphate + H(+). Transfers the 4'-phosphopantetheine moiety from coenzyme A to a Ser of acyl-carrier-protein. The sequence is that of Holo-[acyl-carrier-protein] synthase from Shouchella clausii (strain KSM-K16) (Alkalihalobacillus clausii).